Reading from the N-terminus, the 81-residue chain is Sulfur carrier protein TusA (81 aa).

Residue Cys-19 is the Cysteine persulfide intermediate of the active site.

The protein belongs to the sulfur carrier protein TusA family.

It localises to the cytoplasm. In terms of biological role, sulfur carrier protein which probably makes part of a sulfur-relay system. This chain is Sulfur carrier protein TusA, found in Shewanella baltica (strain OS223).